The following is a 95-amino-acid chain: Aspartyl/glutamyl-tRNA(Asn/Gln) amidotransferase subunit C (95 aa).

Belongs to the GatC family. As to quaternary structure, heterotrimer of A, B and C subunits.

The catalysed reaction is L-glutamyl-tRNA(Gln) + L-glutamine + ATP + H2O = L-glutaminyl-tRNA(Gln) + L-glutamate + ADP + phosphate + H(+). It catalyses the reaction L-aspartyl-tRNA(Asn) + L-glutamine + ATP + H2O = L-asparaginyl-tRNA(Asn) + L-glutamate + ADP + phosphate + 2 H(+). Allows the formation of correctly charged Asn-tRNA(Asn) or Gln-tRNA(Gln) through the transamidation of misacylated Asp-tRNA(Asn) or Glu-tRNA(Gln) in organisms which lack either or both of asparaginyl-tRNA or glutaminyl-tRNA synthetases. The reaction takes place in the presence of glutamine and ATP through an activated phospho-Asp-tRNA(Asn) or phospho-Glu-tRNA(Gln). The sequence is that of Aspartyl/glutamyl-tRNA(Asn/Gln) amidotransferase subunit C from Geobacter metallireducens (strain ATCC 53774 / DSM 7210 / GS-15).